Reading from the N-terminus, the 553-residue chain is Carboxypeptidase Y homolog A (553 aa).

Residues 1–17 form the signal peptide; it reads MRVLSTTLLIGAAAAAV. The propeptide occupies 18–134; that stretch reads SPPQQVLQAP…RLEAFDLRVK (117 aa). Cystine bridges form between C189/C428, C323/C337, C347/C370, C354/C363, and C392/C398. N220 is a glycosylation site (N-linked (GlcNAc...) asparagine). Residue S276 is part of the active site. Residue D467 is part of the active site. An N-linked (GlcNAc...) asparagine glycan is attached at N518. Residue H529 is part of the active site.

The protein belongs to the peptidase S10 family.

The protein resides in the vacuole. It catalyses the reaction Release of a C-terminal amino acid with broad specificity.. Its function is as follows. Vacuolar carboxypeptidase involved in degradation of small peptides. Digests preferentially peptides containing an aliphatic or hydrophobic residue in P1' position, as well as methionine, leucine or phenylalanine in P1 position of ester substrate. The protein is Carboxypeptidase Y homolog A (cpyA) of Talaromyces stipitatus (strain ATCC 10500 / CBS 375.48 / QM 6759 / NRRL 1006) (Penicillium stipitatum).